The following is a 631-amino-acid chain: 1-deoxy-D-xylulose-5-phosphate synthase (631 aa).

Residues H76 and 117-119 (AHS) each bind thiamine diphosphate. A Mg(2+)-binding site is contributed by D148. Residues 149–150 (GA), N177, Y284, and E365 each bind thiamine diphosphate. N177 lines the Mg(2+) pocket.

Belongs to the transketolase family. DXPS subfamily. In terms of assembly, homodimer. It depends on Mg(2+) as a cofactor. Thiamine diphosphate is required as a cofactor.

The enzyme catalyses D-glyceraldehyde 3-phosphate + pyruvate + H(+) = 1-deoxy-D-xylulose 5-phosphate + CO2. Its pathway is metabolic intermediate biosynthesis; 1-deoxy-D-xylulose 5-phosphate biosynthesis; 1-deoxy-D-xylulose 5-phosphate from D-glyceraldehyde 3-phosphate and pyruvate: step 1/1. Functionally, catalyzes the acyloin condensation reaction between C atoms 2 and 3 of pyruvate and glyceraldehyde 3-phosphate to yield 1-deoxy-D-xylulose-5-phosphate (DXP). The chain is 1-deoxy-D-xylulose-5-phosphate synthase from Methylibium petroleiphilum (strain ATCC BAA-1232 / LMG 22953 / PM1).